Reading from the N-terminus, the 245-residue chain is Glutathione S-transferase F4 (245 aa).

Positions 25–106 (AGYKVHGDPF…YIAYVHSSRG (82 aa)) constitute a GST N-terminal domain. Residues 35–36 (ST), 64–65 (HK), 77–78 (QV), and 90–91 (ES) contribute to the glutathione site. The GST C-terminal domain occupies 114–244 (SHETMATLTM…QEKSWFNKPR (131 aa)).

It belongs to the GST superfamily. Phi family.

It is found in the cytoplasm. The protein localises to the cytosol. It carries out the reaction RX + glutathione = an S-substituted glutathione + a halide anion + H(+). In terms of biological role, may be involved in the conjugation of reduced glutathione to a wide number of exogenous and endogenous hydrophobic electrophiles and have a detoxification role against certain herbicides. The protein is Glutathione S-transferase F4 (GSTF4) of Arabidopsis thaliana (Mouse-ear cress).